A 267-amino-acid polypeptide reads, in one-letter code: Nus factor SuhB (267 aa).

Mg(2+)-binding residues include Glu-67, Asp-84, and Leu-86. Glu-67 contacts substrate. Substrate is bound by residues Leu-86 to Thr-89, Arg-183, and Asp-212.

It belongs to the inositol monophosphatase superfamily. As to quaternary structure, homodimer. The rRNA transcription and antitermination complex (rrnTAC) consists of RNA polymerase (RNAP), NusA, NusB, NusE (rpsJ), NusG, SubB, ribosomal protein S4, DNA and precursor rRNA; S4 is more flexible than other subunits. Mg(2+) serves as cofactor.

It is found in the cytoplasm. The enzyme catalyses a myo-inositol phosphate + H2O = myo-inositol + phosphate. Part of the processive rRNA transcription and antitermination complex (rrnTAC). The complex forms an RNA-chaperone ring around the RNA exit tunnel of RNA polymerase (RNAP). It supports rapid transcription and antitermination of rRNA operons, cotranscriptional rRNA folding, and annealing of distal rRNA regions to allow correct ribosome biogenesis. This subunit may play a central role in organizing the structure. IMPase activity is not required for its Nus factor function. This Escherichia coli O157:H7 protein is Nus factor SuhB (suhB).